We begin with the raw amino-acid sequence, 795 residues long: Volume-regulated anion channel subunit LRRC8E (795 aa).

Topologically, residues 1–22 are cytoplasmic; sequence MIPVAEFKQFTEQQPAFKVLKP. The chain crosses the membrane as a helical span at residues 23 to 43; the sequence is WWDVLAEYLTVAMLMIGVFGC. The Extracellular segment spans residues 44 to 116; sequence TLQVTQDKII…YETALHWYAK (73 aa). The cysteines at positions 54 and 300 are disulfide-linked. An N-linked (GlcNAc...) asparagine glycan is attached at N63. Residues 117–137 traverse the membrane as a helical segment; it reads YFPYLVVIHTLIFMVCTSFWF. Topologically, residues 138–264 are cytoplasmic; that stretch reads KFPGTSSKIE…IRQTVLKVCK (127 aa). Residues 265-285 form a helical membrane-spanning segment; the sequence is FFAILVYNLIYVEKISFLVAC. The Extracellular segment spans residues 286 to 312; that stretch reads RVETSEITGYASFCCNHTKAHLFSKLA. A glycan (N-linked (GlcNAc...) asparagine) is linked at N301. Residues 313–333 form a helical membrane-spanning segment; sequence FCYISFVCVYGITCLYTLYWL. Residues 334 to 795 lie on the Cytoplasmic side of the membrane; that stretch reads FHRPLKEYSF…AEVREKMEEE (462 aa). LRR repeat units follow at residues 535 to 556, 558 to 578, 582 to 603, 605 to 626, 630 to 651, 653 to 674, 676 to 697, 699 to 720, 722 to 744, and 745 to 766; these read QLKVLSLRSNAGKVPASVTDVA, HLQRLSLHNDGARLLALNSLK, VLRELELVACGLERIPHAIFSL, ALQELDLKDNHLRSIEEILSFQ, KLVTLRLWHNQIAYVPEHVRKL, SLEQLYLSHNKLETLPTQLGQC, GLRLLDLSHNGLRSLPPELGLL, SLQHLALSYNALESLPDELFFC, KLRTLLLGYNHLTQLSPDVAALQ, and ALSRLELKGNRLETLPEELGDC.

It belongs to the LRRC8 family. Heterohexamer; oligomerizes with other LRRC8 proteins (LRRC8A, LRRC8C, LRRC8D and/or LRRC8B) to form a heterohexamer. In vivo, the subunit composition may depend primarily on expression levels, and heterooligomeric channels containing various proportions of the different LRRC8 proteins may coexist.

It is found in the cell membrane. The protein resides in the endoplasmic reticulum membrane. The protein localises to the lysosome membrane. It carries out the reaction chloride(in) = chloride(out). The catalysed reaction is iodide(out) = iodide(in). It catalyses the reaction taurine(out) = taurine(in). The enzyme catalyses 2',3'-cGAMP(out) = 2',3'-cGAMP(in). Functionally, non-essential component of the volume-regulated anion channel (VRAC, also named VSOAC channel), an anion channel required to maintain a constant cell volume in response to extracellular or intracellular osmotic changes. The VRAC channel conducts iodide better than chloride and can also conduct organic osmolytes like taurine. Mediates efflux of amino acids, such as aspartate, in response to osmotic stress. The VRAC channel also mediates transport of immunoreactive cyclic dinucleotide GMP-AMP (2'-3'-cGAMP), an immune messenger produced in response to DNA virus in the cytosol. Channel activity requires LRRC8A plus at least one other family member (LRRC8B, LRRC8C, LRRC8D or LRRC8E); channel characteristics depend on the precise subunit composition. Also plays a role in lysosome homeostasis by forming functional lysosomal VRAC channels in response to low cytoplasmic ionic strength condition: lysosomal VRAC channels are necessary for the formation of large lysosome-derived vacuoles, which store and then expel excess water to maintain cytosolic water homeostasis. In Mus musculus (Mouse), this protein is Volume-regulated anion channel subunit LRRC8E.